We begin with the raw amino-acid sequence, 291 residues long: 2-dehydro-3-deoxyphosphooctonate aldolase 2 (291 aa).

Residue Ala-2 is modified to N-acetylalanine.

Belongs to the KdsA family. As to expression, expressed in roots, apical meristem, emerging leaves, hydathodes of young leaves, styles of mature flowers and funicules of mature siliques.

The protein localises to the cytoplasm. The enzyme catalyses D-arabinose 5-phosphate + phosphoenolpyruvate + H2O = 3-deoxy-alpha-D-manno-2-octulosonate-8-phosphate + phosphate. Functionally, catalyzes the stereospecific condensation of D-arabinose 5-phosphate and phosphoenolpyruvate to form 3-deoxy-D-manno-octulosonate 8-phosphate (KDO-8-phosphate) and inorganic phosphate. Involved in the biosynthesis of 3-deoxy-D-manno-octulosonate (KDO) which is an indispensable component of rhamnogalacturonan II (RG-II), a structurally complex pectic polysaccharide of the primary cell wall. RG-II is essential for the cell wall integrity of rapidly growing tissues and pollen tube growth and elongation. The polypeptide is 2-dehydro-3-deoxyphosphooctonate aldolase 2 (KDSA2) (Arabidopsis thaliana (Mouse-ear cress)).